We begin with the raw amino-acid sequence, 268 residues long: Small ribosomal subunit protein uS3 (268 aa).

The 71-residue stretch at 40 to 110 (IRNLFFINYR…KLDLTINEIG (71 aa)) folds into the KH type-2 domain.

It belongs to the universal ribosomal protein uS3 family. In terms of assembly, part of the 30S ribosomal subunit. Forms a tight complex with proteins S10 and S14.

Functionally, binds the lower part of the 30S subunit head. Binds mRNA in the 70S ribosome, positioning it for translation. The protein is Small ribosomal subunit protein uS3 of Mycoplasma genitalium (strain ATCC 33530 / DSM 19775 / NCTC 10195 / G37) (Mycoplasmoides genitalium).